Here is a 466-residue protein sequence, read N- to C-terminus: Adenosylhomocysteinase (466 aa).

Substrate contacts are provided by Thr57, Asp132, and Glu192. Thr193 to Thr195 lines the NAD(+) pocket. Positions 222 and 226 each coordinate substrate. NAD(+) is bound by residues Asn227, Gly256–Gly261, Glu279, Asn314, Ile335–His337, and Asn380.

Belongs to the adenosylhomocysteinase family. NAD(+) serves as cofactor.

The protein localises to the cytoplasm. The catalysed reaction is S-adenosyl-L-homocysteine + H2O = L-homocysteine + adenosine. The protein operates within amino-acid biosynthesis; L-homocysteine biosynthesis; L-homocysteine from S-adenosyl-L-homocysteine: step 1/1. Functionally, may play a key role in the regulation of the intracellular concentration of adenosylhomocysteine. This Mesorhizobium japonicum (strain LMG 29417 / CECT 9101 / MAFF 303099) (Mesorhizobium loti (strain MAFF 303099)) protein is Adenosylhomocysteinase.